We begin with the raw amino-acid sequence, 127 residues long: Ribosome-binding factor A (127 aa).

It belongs to the RbfA family. Monomer. Binds 30S ribosomal subunits, but not 50S ribosomal subunits or 70S ribosomes.

Its subcellular location is the cytoplasm. One of several proteins that assist in the late maturation steps of the functional core of the 30S ribosomal subunit. Associates with free 30S ribosomal subunits (but not with 30S subunits that are part of 70S ribosomes or polysomes). Required for efficient processing of 16S rRNA. May interact with the 5'-terminal helix region of 16S rRNA. This is Ribosome-binding factor A from Chloroflexus aurantiacus (strain ATCC 29366 / DSM 635 / J-10-fl).